Consider the following 375-residue polypeptide: Putative monooxygenase Rv1533 (375 aa).

FMN contacts are provided by residues Q190, G195, G224, and 243–246 (WCGS).

Belongs to the nitronate monooxygenase family. The cofactor is FMN.

This Mycobacterium tuberculosis (strain ATCC 25618 / H37Rv) protein is Putative monooxygenase Rv1533.